The chain runs to 45 residues: Large ribosomal subunit protein bL34 (45 aa).

The interval 1 to 45 is disordered; that stretch reads MTKRTFGGTSRKRKRVSGFRVRMRSHTGRRVIKSRRKRGRERIAV. Basic residues predominate over residues 10–45; the sequence is SRKRKRVSGFRVRMRSHTGRRVIKSRRKRGRERIAV.

This sequence belongs to the bacterial ribosomal protein bL34 family.

This is Large ribosomal subunit protein bL34 from Prochlorococcus marinus subsp. pastoris (strain CCMP1986 / NIES-2087 / MED4).